Here is an 87-residue protein sequence, read N- to C-terminus: Small ribosomal subunit protein bS20 (87 aa).

The segment at 1–27 (MANIKSAKKRAVTSEKRRKHNASRRSM) is disordered.

Belongs to the bacterial ribosomal protein bS20 family.

In terms of biological role, binds directly to 16S ribosomal RNA. The sequence is that of Small ribosomal subunit protein bS20 from Erwinia tasmaniensis (strain DSM 17950 / CFBP 7177 / CIP 109463 / NCPPB 4357 / Et1/99).